We begin with the raw amino-acid sequence, 317 residues long: tRNA N6-adenosine threonylcarbamoyltransferase (317 aa).

Fe cation is bound by residues H110 and H114. Substrate contacts are provided by residues 132–136, D165, G178, D182, and N271; that span reads VVSGG. A Fe cation-binding site is contributed by D300.

This sequence belongs to the KAE1 / TsaD family. Requires Fe(2+) as cofactor.

It localises to the cytoplasm. The catalysed reaction is L-threonylcarbamoyladenylate + adenosine(37) in tRNA = N(6)-L-threonylcarbamoyladenosine(37) in tRNA + AMP + H(+). Functionally, required for the formation of a threonylcarbamoyl group on adenosine at position 37 (t(6)A37) in tRNAs that read codons beginning with adenine. Is involved in the transfer of the threonylcarbamoyl moiety of threonylcarbamoyl-AMP (TC-AMP) to the N6 group of A37, together with TsaE and TsaB. TsaD likely plays a direct catalytic role in this reaction. The sequence is that of tRNA N6-adenosine threonylcarbamoyltransferase from Mesoplasma florum (strain ATCC 33453 / NBRC 100688 / NCTC 11704 / L1) (Acholeplasma florum).